Reading from the N-terminus, the 818-residue chain is Auxin response factor 12 (818 aa).

Positions 1 to 10 are enriched in low complexity; sequence MSSSSAASIG. The segment at 1–24 is disordered; the sequence is MSSSSAASIGPPQPPPPPAPPEEE. The segment covering 11–20 has biased composition (pro residues); that stretch reads PPQPPPPPAP. A DNA-binding region (TF-B3) is located at residues 135-237; sequence FCKTLTASDT…QLLLGIRRAS (103 aa). 2 disordered regions span residues 526–565 and 629–648; these read NDQK…FSDP and GSVL…NKIG. Positions 629–640 are enriched in polar residues; that stretch reads GSVLHNSPTSKD. The PB1 domain maps to 719–803; that stretch reads RTFVKVYKSG…WYIKILSPED (85 aa).

The protein belongs to the ARF family. In terms of assembly, homodimers and heterodimers. Expressed in roots, culms, leaves and young panicles.

Its subcellular location is the nucleus. Functionally, auxin response factors (ARFs) are transcriptional factors that bind specifically to the DNA sequence 5'-TGTCTC-3' found in the auxin-responsive promoter elements (AuxREs). The polypeptide is Auxin response factor 12 (ARF12) (Oryza sativa subsp. japonica (Rice)).